A 317-amino-acid chain; its full sequence is UV DNA damage endonuclease (317 aa).

This sequence belongs to the uve1/UvsE family.

In terms of biological role, component in a DNA repair pathway. Removal of UV LIGHT damaged nucleotides. Recognizes pyrimidine dimers and cleave a phosphodiester bond immediately 5' to the lesion. The protein is UV DNA damage endonuclease of Bacillus thuringiensis subsp. konkukian (strain 97-27).